Here is a 1286-residue protein sequence, read N- to C-terminus: 5-oxoprolinase (1286 aa).

Residues serine 930 and serine 1077 each carry the phosphoserine modification.

It belongs to the oxoprolinase family. As to quaternary structure, homodimer.

The protein localises to the cytoplasm. The catalysed reaction is 5-oxo-L-proline + ATP + 2 H2O = L-glutamate + ADP + phosphate + H(+). Its function is as follows. Catalyzes the cleavage of 5-oxo-L-proline to form L-glutamate coupled to the hydrolysis of ATP to ADP and inorganic phosphate. The protein is 5-oxoprolinase (OXP1) of Saccharomyces cerevisiae (strain ATCC 204508 / S288c) (Baker's yeast).